Here is a 367-residue protein sequence, read N- to C-terminus: Methylthioribose-1-phosphate isomerase (367 aa).

Catalysis depends on D250, which acts as the Proton donor.

The protein belongs to the eIF-2B alpha/beta/delta subunits family. MtnA subfamily.

Its subcellular location is the cytoplasm. It localises to the nucleus. The catalysed reaction is 5-(methylsulfanyl)-alpha-D-ribose 1-phosphate = 5-(methylsulfanyl)-D-ribulose 1-phosphate. It participates in amino-acid biosynthesis; L-methionine biosynthesis via salvage pathway; L-methionine from S-methyl-5-thio-alpha-D-ribose 1-phosphate: step 1/6. Its function is as follows. Catalyzes the interconversion of methylthioribose-1-phosphate (MTR-1-P) into methylthioribulose-1-phosphate (MTRu-1-P). The protein is Methylthioribose-1-phosphate isomerase (IDI2) of Zea mays (Maize).